A 255-amino-acid chain; its full sequence is Small ribosomal subunit protein uS2 (255 aa).

The protein belongs to the universal ribosomal protein uS2 family.

In Geotalea daltonii (strain DSM 22248 / JCM 15807 / FRC-32) (Geobacter daltonii), this protein is Small ribosomal subunit protein uS2.